The primary structure comprises 1091 residues: Voltage-dependent calcium channel subunit alpha-2/delta-3 (1091 aa).

An N-terminal signal peptide occupies residues 1-33 (MAGPGSLCCASRGASALLATALLYAALGDVVRS). Over 34-1068 (EQQIPLSVVK…HPEENARECG (1035 aa)) the chain is Extracellular. The N-linked (GlcNAc...) asparagine glycan is linked to Asn-166. The VWFA domain occupies 256–438 (DVVILVDVSG…ENVMEYLHVL (183 aa)). Positions 262, 264, and 266 each coordinate a divalent metal cation. The MIDAS-like motif motif lies at 262 to 266 (DVSGS). Residue Asn-309 is glycosylated (N-linked (GlcNAc...) asparagine). Cys-412 and Cys-1055 are joined by a disulfide. The Cache domain maps to 452–549 (WTEAYIDSTL…RPLYEEGKKR (98 aa)). N-linked (GlcNAc...) asparagine glycans are attached at residues Asn-553 and Asn-632. Tyr-924 bears the Phosphotyrosine mark. The chain crosses the membrane as a helical span at residues 1069 to 1089 (GASSLQAQAALLLLPLVSSLF). Topologically, residues 1090–1091 (SR) are cytoplasmic.

It belongs to the calcium channel subunit alpha-2/delta family. In terms of assembly, dimer formed of alpha-2-2 and delta-2 chains; disulfide-linked. Voltage-dependent calcium channels are multisubunit complexes, consisting of alpha-1 (CACNA1), alpha-2 (CACNA2D), beta (CACNB) and delta (CACNA2D) subunits in a 1:1:1:1 ratio. In terms of processing, N-glycosylated. May be proteolytically processed into subunits alpha-2-3 and delta-3 that are disulfide-linked. It is however unclear whether such cleavage really takes place in vivo and has a functional role. In terms of tissue distribution, brain-specific. Predominantly expressed in the caudate putamen, entorhinal complex, hippocampus and cortex.

The protein resides in the membrane. The alpha-2/delta subunit of voltage-dependent calcium channels regulates calcium current density and activation/inactivation kinetics of the calcium channel. Acts as a regulatory subunit for P/Q-type calcium channel (CACNA1A), N-type (CACNA1B), L-type (CACNA1C OR CACNA1D) but not T-type (CACNA1G). The sequence is that of Voltage-dependent calcium channel subunit alpha-2/delta-3 (Cacna2d3) from Mus musculus (Mouse).